A 126-amino-acid polypeptide reads, in one-letter code: Fluoride-specific ion channel FluC (126 aa).

The next 4 membrane-spanning stretches (helical) occupy residues 4-24 (FMLL…RYLI), 35-55 (GFPY…GVLM), 71-91 (IIGL…MDNV), and 104-124 (LNIL…FQLM). Positions 78 and 81 each coordinate Na(+).

It belongs to the fluoride channel Fluc/FEX (TC 1.A.43) family.

It localises to the cell inner membrane. It carries out the reaction fluoride(in) = fluoride(out). With respect to regulation, na(+) is not transported, but it plays an essential structural role and its presence is essential for fluoride channel function. Fluoride-specific ion channel. Important for reducing fluoride concentration in the cell, thus reducing its toxicity. This chain is Fluoride-specific ion channel FluC, found in Aliivibrio salmonicida (strain LFI1238) (Vibrio salmonicida (strain LFI1238)).